Consider the following 111-residue polypeptide: Small ribosomal subunit protein bS6 (111 aa).

This sequence belongs to the bacterial ribosomal protein bS6 family.

Functionally, binds together with bS18 to 16S ribosomal RNA. This Francisella tularensis subsp. tularensis (strain FSC 198) protein is Small ribosomal subunit protein bS6.